The primary structure comprises 122 residues: Holo-[acyl-carrier-protein] synthase (122 aa).

Positions 8 and 56 each coordinate Mg(2+).

It belongs to the P-Pant transferase superfamily. AcpS family. It depends on Mg(2+) as a cofactor.

The protein localises to the cytoplasm. The catalysed reaction is apo-[ACP] + CoA = holo-[ACP] + adenosine 3',5'-bisphosphate + H(+). Transfers the 4'-phosphopantetheine moiety from coenzyme A to a Ser of acyl-carrier-protein. The polypeptide is Holo-[acyl-carrier-protein] synthase (Alkaliphilus oremlandii (strain OhILAs) (Clostridium oremlandii (strain OhILAs))).